The sequence spans 284 residues: uncharacterized protein (284 aa).

Residues 1–8 lie on the Cytoplasmic side of the membrane; it reads MLWKVSKM. Residues 9–25 form a helical membrane-spanning segment; it reads FLGGLVALTTISVATLY. Topologically, residues 26-80 are extracellular; the sequence is HYQNRLVYPSWAQGARNHVDTPDSRGIPYEKLTLITQDHIKLEAWDIKNENSTST. A helical membrane pass occupies residues 81–101; sequence VLILCPNAGNIGYFILIIDIF. At 102 to 284 the chain is on the cytoplasmic side; sequence YRQFGMSVFI…RDFLIEKGFI (183 aa).

It to S.pombe bem46 and M.tuberculosis Rv2307c.

It is found in the mitochondrion membrane. This is an uncharacterized protein from Saccharomyces cerevisiae (strain ATCC 204508 / S288c) (Baker's yeast).